The primary structure comprises 452 residues: Na(+)/H(+) antiporter NhaA (452 aa).

11 consecutive transmembrane segments (helical) span residues 23 to 43 (MMLFLASVLAVIMANSSLSTI), 71 to 91 (LLQFVNDVLMVIFFLAVGLEI), 108 to 128 (LPIVGAIGGMIVPVLFFLLVV), 136 to 156 (GAAIPMSTDIAFALAALAVLG), 165 to 185 (VFLTALAVADDIGGIIVIALF), 189 to 209 (HINIGMLAIAFGILFIMYLMG), 216 to 236 (LGLYFVCTFFVWLFFLQSGIH), 316 to 336 (IVGYFVLPLFAFANAGITLGG), 349 to 369 (VFLGLFVGKPLGIYFFTYGFV), 385 to 405 (LMAVSLFGGIGFTVSLFIATL), and 418 to 438 (EAKLGIFVASIFAAVVGIVTL).

This sequence belongs to the NhaA Na(+)/H(+) (TC 2.A.33) antiporter family.

It localises to the cell inner membrane. It catalyses the reaction Na(+)(in) + 2 H(+)(out) = Na(+)(out) + 2 H(+)(in). Na(+)/H(+) antiporter that extrudes sodium in exchange for external protons. The polypeptide is Na(+)/H(+) antiporter NhaA (Porphyromonas gingivalis (strain ATCC 33277 / DSM 20709 / CIP 103683 / JCM 12257 / NCTC 11834 / 2561)).